Here is a 712-residue protein sequence, read N- to C-terminus: Ribosomal RNA large subunit methyltransferase K/L (712 aa).

The region spanning 46–157 (GAYQALLHSR…REKLIVSLDL (112 aa)) is the THUMP domain.

It belongs to the methyltransferase superfamily. RlmKL family.

It is found in the cytoplasm. It carries out the reaction guanosine(2445) in 23S rRNA + S-adenosyl-L-methionine = N(2)-methylguanosine(2445) in 23S rRNA + S-adenosyl-L-homocysteine + H(+). The enzyme catalyses guanosine(2069) in 23S rRNA + S-adenosyl-L-methionine = N(2)-methylguanosine(2069) in 23S rRNA + S-adenosyl-L-homocysteine + H(+). Functionally, specifically methylates the guanine in position 2445 (m2G2445) and the guanine in position 2069 (m7G2069) of 23S rRNA. The sequence is that of Ribosomal RNA large subunit methyltransferase K/L from Haemophilus ducreyi (strain 35000HP / ATCC 700724).